Reading from the N-terminus, the 291-residue chain is Aliphatic sulfonates import ATP-binding protein SsuB 2 (291 aa).

Positions 26-247 (LRVRGIAKRY…APGLPALASI (222 aa)) constitute an ABC transporter domain. 58–65 (GRSGCGKS) contributes to the ATP binding site. Residues 264-291 (PAAPKAQTRHGPPRGATAQDTSPLQRIL) form a disordered region. Over residues 281–291 (AQDTSPLQRIL) the composition is skewed to polar residues.

Belongs to the ABC transporter superfamily. Aliphatic sulfonates importer (TC 3.A.1.17.2) family. The complex is composed of two ATP-binding proteins (SsuB), two transmembrane proteins (SsuC) and a solute-binding protein (SsuA).

It localises to the cell inner membrane. The catalysed reaction is ATP + H2O + aliphatic sulfonate-[sulfonate-binding protein]Side 1 = ADP + phosphate + aliphatic sulfonateSide 2 + [sulfonate-binding protein]Side 1.. Functionally, part of the ABC transporter complex SsuABC involved in aliphatic sulfonates import. Responsible for energy coupling to the transport system. The protein is Aliphatic sulfonates import ATP-binding protein SsuB 2 of Xanthomonas axonopodis pv. citri (strain 306).